The chain runs to 118 residues: Non-specific lipid-transfer protein 3 (118 aa).

Residues 1–25 (MARSMNLACVALVMCMVVIAPMAEA) form the signal peptide. 4 disulfides stabilise this stretch: C29–C76, C39–C53, C54–C99, and C74–C113.

It belongs to the plant LTP family.

Its function is as follows. Plant non-specific lipid-transfer proteins transfer phospholipids as well as galactolipids across membranes. May play a role in wax or cutin deposition in the cell walls of expanding epidermal cells and certain secretory tissues. This is Non-specific lipid-transfer protein 3 from Lens culinaris (Lentil).